A 318-amino-acid chain; its full sequence is tRNA dimethylallyltransferase (318 aa).

16 to 23 (GPTASGKT) provides a ligand contact to ATP. 18–23 (TASGKT) is a substrate binding site. 4 interaction with substrate tRNA regions span residues 41-44 (DSAL), 165-169 (QRINR), 246-251 (RCVGYR), and 279-286 (KRQITWLR).

The protein belongs to the IPP transferase family. As to quaternary structure, monomer. Requires Mg(2+) as cofactor.

It catalyses the reaction adenosine(37) in tRNA + dimethylallyl diphosphate = N(6)-dimethylallyladenosine(37) in tRNA + diphosphate. Its function is as follows. Catalyzes the transfer of a dimethylallyl group onto the adenine at position 37 in tRNAs that read codons beginning with uridine, leading to the formation of N6-(dimethylallyl)adenosine (i(6)A). The chain is tRNA dimethylallyltransferase from Actinobacillus succinogenes (strain ATCC 55618 / DSM 22257 / CCUG 43843 / 130Z).